The sequence spans 95 residues: CRISPR-associated endoribonuclease Cas2 1 (95 aa).

Mg(2+) is bound at residue D11.

Belongs to the CRISPR-associated endoribonuclease Cas2 protein family. In terms of assembly, homodimer, forms a heterotetramer with a Cas1 homodimer. Mg(2+) serves as cofactor.

Functionally, CRISPR (clustered regularly interspaced short palindromic repeat), is an adaptive immune system that provides protection against mobile genetic elements (viruses, transposable elements and conjugative plasmids). CRISPR clusters contain sequences complementary to antecedent mobile elements and target invading nucleic acids. CRISPR clusters are transcribed and processed into CRISPR RNA (crRNA). Functions as a ssRNA-specific endoribonuclease. Involved in the integration of spacer DNA into the CRISPR cassette. The polypeptide is CRISPR-associated endoribonuclease Cas2 1 (Methanospirillum hungatei JF-1 (strain ATCC 27890 / DSM 864 / NBRC 100397 / JF-1)).